The primary structure comprises 107 residues: Large ribosomal subunit protein uL24 (107 aa).

It belongs to the universal ribosomal protein uL24 family. Part of the 50S ribosomal subunit.

Its function is as follows. One of two assembly initiator proteins, it binds directly to the 5'-end of the 23S rRNA, where it nucleates assembly of the 50S subunit. One of the proteins that surrounds the polypeptide exit tunnel on the outside of the subunit. This Neisseria meningitidis serogroup C (strain 053442) protein is Large ribosomal subunit protein uL24.